The sequence spans 128 residues: Glycine cleavage system H protein (128 aa).

One can recognise a Lipoyl-binding domain in the interval serine 24–lysine 105. Lysine 65 carries the post-translational modification N6-lipoyllysine.

The protein belongs to the GcvH family. The glycine cleavage system is composed of four proteins: P, T, L and H. (R)-lipoate is required as a cofactor.

In terms of biological role, the glycine cleavage system catalyzes the degradation of glycine. The H protein shuttles the methylamine group of glycine from the P protein to the T protein. The polypeptide is Glycine cleavage system H protein (Aromatoleum aromaticum (strain DSM 19018 / LMG 30748 / EbN1) (Azoarcus sp. (strain EbN1))).